The chain runs to 1430 residues: 3'-5' RNA helicase YTHDC2 (1430 aa).

Residues 1–37 (MSRPSSVSPRQPAPGGGGGGGPSPCGPGGGGRAKGLK) are disordered. Gly residues predominate over residues 14 to 33 (PGGGGGGGPSPCGPGGGGRA). The R3H domain maps to 38–106 (DIRIDEEVKI…NRYLTVKKKD (69 aa)). The region spanning 203–369 (VKIIKENKVV…FGSCPVIYIQ (167 aa)) is the Helicase ATP-binding domain. 216–223 (GETGSGKT) is a binding site for ATP. A DEAH box motif is present at residues 316-319 (DEVH). ANK repeat units lie at residues 506–538 (TSATALMVAAGRGFASQVEQLISMGANVHSKAS) and 539–571 (NGWMALDWAKHFGQTEIVDLLESYSASLEFGNL). Residues 612–784 (LLYNICHSCD…ELCLHTKLLA (173 aa)) form the Helicase C-terminal domain. Phosphoserine is present on residues serine 1089, serine 1090, and serine 1092. The segment covering 1164–1174 (EQSAGLQQPSG) has biased composition (polar residues). A disordered region spans residues 1164 to 1288 (EQSAGLQQPS…SPSPRPNMPV (125 aa)). Over residues 1191–1200 (SSWRSNNSRK) the composition is skewed to low complexity. At serine 1202 the chain carries Phosphoserine. The segment covering 1231-1249 (KYKDRGILHPKRGTEDRSD) has biased composition (basic and acidic residues). The segment covering 1250-1264 (QSSVKSTDSSSYPSP) has biased composition (low complexity). Serine 1263, serine 1267, and serine 1281 each carry phosphoserine. One can recognise a YTH domain in the interval 1288–1418 (VRYFIMKSSN…QVGEQLLQLW (131 aa)). RNA is bound by residues 1294-1296 (KSS), tryptophan 1310, and tryptophan 1360.

The protein belongs to the DEAD box helicase family. DEAH subfamily. In terms of assembly, interacts with MEIOC; binds transcripts that regulate the mitotic cell cycle inhibiting progression into metaphase, thereby allowing meiotic prophase to proceed normally. Interacts (via ANK repeats) with XRN1. Interacts with ZCCHC4. Associates with the small ribosomal subunit. Interacts with RBM46.

It localises to the cytoplasm. It is found in the perinuclear region. The catalysed reaction is ATP + H2O = ADP + phosphate + H(+). Its function is as follows. 3'-5' RNA helicase that plays a key role in the male and female germline by promoting transition from mitotic to meiotic divisions in stem cells. Specifically recognizes and binds N6-methyladenosine (m6A)-containing RNAs, a modification present at internal sites of mRNAs and some non-coding RNAs that plays a role in the efficiency of RNA processing and stability. Essential for ensuring a successful progression of the meiotic program in the germline by regulating the level of m6A-containing RNAs. Acts by binding and promoting degradation of m6A-containing mRNAs: the 3'-5' RNA helicase activity is required for this process and RNA degradation may be mediated by XRN1 exoribonuclease. Required for both spermatogenesis and oogenesis. In Pongo abelii (Sumatran orangutan), this protein is 3'-5' RNA helicase YTHDC2.